A 631-amino-acid polypeptide reads, in one-letter code: 2-isopropylmalate synthase 2, chloroplastic (631 aa).

The N-terminal 46 residues, 1-46, are a transit peptide targeting the chloroplast; the sequence is MESSILKSPNLSSPSFGVPSIPALSSSSTSPFSSLHLRSQNHRTIS. Positions 87 to 360 constitute a Pyruvate carboxyltransferase domain; it reads VRIFDTTLRD…FTGIDTRHIV (274 aa). A divalent metal cation is bound by residues D96, H293, and N329.

It belongs to the alpha-IPM synthase/homocitrate synthase family. LeuA type 1 subfamily. Homotetramer. Requires Mg(2+) as cofactor. It depends on Mn(2+) as a cofactor. In terms of tissue distribution, expressed in roots, stems, leaves, flowers and siliques.

Its subcellular location is the plastid. It localises to the chloroplast. It carries out the reaction 3-methyl-2-oxobutanoate + acetyl-CoA + H2O = (2S)-2-isopropylmalate + CoA + H(+). It participates in amino-acid biosynthesis; L-leucine biosynthesis; L-leucine from 3-methyl-2-oxobutanoate: step 1/4. With respect to regulation, feedback inhibition by Leu. Catalyzes the condensation of the acetyl group of acetyl-CoA with 3-methyl-2-oxobutanoate (2-oxoisovalerate) to form 3-carboxy-3-hydroxy-4-methylpentanoate (2-isopropylmalate). Involved in Leu biosynthesis, but does not participate in the chain elongation of glucosinolates. The chain is 2-isopropylmalate synthase 2, chloroplastic from Arabidopsis thaliana (Mouse-ear cress).